Reading from the N-terminus, the 204-residue chain is Guanylate kinase (204 aa).

Residues 5-184 (GLLIVLSGPS…ACDKIKAIVL (180 aa)) form the Guanylate kinase-like domain. An ATP-binding site is contributed by 12-19 (GPSGVGKG).

Belongs to the guanylate kinase family.

It localises to the cytoplasm. It carries out the reaction GMP + ATP = GDP + ADP. In terms of biological role, essential for recycling GMP and indirectly, cGMP. This is Guanylate kinase (gmk) from Bacillus subtilis (strain 168).